A 249-amino-acid chain; its full sequence is FMN reductase (NADPH) (249 aa).

Belongs to the flavin oxidoreductase frp family. Homodimer.

The enzyme catalyses FMNH2 + NADP(+) = FMN + NADPH + 2 H(+). Reduces FMNH(2) to FMN, with NADPH as reductant. It also reduces nitroaromatic compounds, quinones and azo dyes. The sequence is that of FMN reductase (NADPH) (nfrA1) from Bacillus subtilis (strain 168).